The sequence spans 179 residues: Fucolectin-4 (179 aa).

Residues 1-23 (MEVKTIMLLFQILAISTLKQGSA) form the signal peptide. Residues 31-179 (EENVALRGRA…VEVNALLPVN (149 aa)) are F5/8 type C-like. Residues Asn-58, Asp-61, Asn-63, and Ser-72 each contribute to the Ca(2+) site. Disulfide bonds link Cys-73-Cys-168, Cys-104-Cys-105, and Cys-130-Cys-146. Alpha-L-fucose is bound by residues His-75 and Arg-101. Residues 101–103 (RGD) carry the Cell attachment site motif. Alpha-L-fucose is bound at residue Arg-108. Residues Cys-168 and Glu-169 each contribute to the Ca(2+) site.

The protein belongs to the fucolectin family. Homotrimer. As to expression, gill mucous cells.

It is found in the secreted. Functionally, acts as a defensive agent. Recognizes blood group fucosylated oligosaccharides including A, B, H and Lewis B-type antigens. Does not recognize Lewis A antigen and has low affinity for monovalent haptens. In Anguilla japonica (Japanese eel), this protein is Fucolectin-4.